A 581-amino-acid polypeptide reads, in one-letter code: Zinc finger protein 674 (581 aa).

The region spanning 8–79 is the KRAB domain; that stretch reads LTFKDVFVDF…DGGTPVRTCA (72 aa). 4 consecutive C2H2-type zinc fingers follow at residues 224–246, 252–274, 280–302, and 308–330; these read YKCT…QRTH, YECC…QRTH, YECS…QRTH, and FVCD…EKTH. The segment covering 357–371 has biased composition (basic and acidic residues); the sequence is PQCSEHGKASDEKPS. The tract at residues 357 to 377 is disordered; sequence PQCSEHGKASDEKPSPTKHWR. 7 C2H2-type zinc fingers span residues 385-407, 413-435, 441-463, 469-491, 497-519, 525-547, and 553-575; these read YECS…QRIH, YECS…HRTH, YECR…QRMH, YKCN…QRIH, YECT…QRIH, YKCS…HRTH, and YECR…QRSH.

This sequence belongs to the krueppel C2H2-type zinc-finger protein family. Expressed in testis.

It localises to the nucleus. Its function is as follows. May be involved in transcriptional regulation. The sequence is that of Zinc finger protein 674 (ZNF674) from Homo sapiens (Human).